Reading from the N-terminus, the 58-residue chain is Large ribosomal subunit protein uL30 (58 aa).

This sequence belongs to the universal ribosomal protein uL30 family. As to quaternary structure, part of the 50S ribosomal subunit.

The chain is Large ribosomal subunit protein uL30 from Zymomonas mobilis subsp. mobilis (strain ATCC 31821 / ZM4 / CP4).